The following is a 448-amino-acid chain: Trigger factor (448 aa).

The 82-residue stretch at 162 to 243 folds into the PPIase FKBP-type domain; the sequence is DDFAIIDIEA…VQQTKERKLP (82 aa). A disordered region spans residues 426–448; that stretch reads DEGKAVDPSEYFGEEEESAEESE. The span at 437 to 448 shows a compositional bias: acidic residues; it reads FGEEEESAEESE.

The protein belongs to the FKBP-type PPIase family. Tig subfamily.

The protein localises to the cytoplasm. It catalyses the reaction [protein]-peptidylproline (omega=180) = [protein]-peptidylproline (omega=0). Involved in protein export. Acts as a chaperone by maintaining the newly synthesized protein in an open conformation. Functions as a peptidyl-prolyl cis-trans isomerase. This is Trigger factor from Corynebacterium diphtheriae (strain ATCC 700971 / NCTC 13129 / Biotype gravis).